The chain runs to 473 residues: Cytochrome P450 716A2 (473 aa).

A helical transmembrane segment spans residues 1–21 (MYLTIIFLFISSIIFPLLFFL). Position 420 (C420) interacts with heme.

It belongs to the cytochrome P450 family. Heme serves as cofactor.

Its subcellular location is the membrane. Its function is as follows. Possesses triterpene oxidizing activity. Catalyzes the C28 hydroxylation of alpha-amyrin, beta-amyrin, and lupeol, producing uvaol, erythrodiol, and betulin, respectively. Catalyzes the C28 carboxylation of alpha- and beta-amyrin. Possesses 22alpha-hydroxylation activity against alpha- and beta-amaryn. The polypeptide is Cytochrome P450 716A2 (Arabidopsis thaliana (Mouse-ear cress)).